The chain runs to 324 residues: FCS-Like Zinc finger 11 (324 aa).

An FLZ-type zinc finger spans residues N266 to L309.

The protein belongs to the FLZ family. Interacts with KIN10 and KIN11 via its FLZ-type zinc finger domain. Forms heterodimer with FLZ2 in vitro.

It localises to the cytoplasm. Its subcellular location is the nucleus. May act as an adapter to facilitate the interaction of SnRK1 complex with effector proteins, conferring tissue- and stimulus-type specific differences in the SnRK1 regulation pathway. The sequence is that of FCS-Like Zinc finger 11 from Arabidopsis thaliana (Mouse-ear cress).